The primary structure comprises 222 residues: UPF0758 protein YicR (222 aa).

The 123-residue stretch at 100 to 222 (PLLSPEMTRE…YVSFAERGWI (123 aa)) folds into the MPN domain. Residues H171, H173, and D184 each contribute to the Zn(2+) site. The JAMM motif motif lies at 171–184 (HNHPSGCAEPSKAD).

It belongs to the UPF0758 family. YicR subfamily.

This is UPF0758 protein YicR from Escherichia coli O45:K1 (strain S88 / ExPEC).